A 205-amino-acid chain; its full sequence is Ribosomal RNA small subunit methyltransferase G (205 aa).

Residues G66, F71, I119 to E120, and R135 contribute to the S-adenosyl-L-methionine site.

Belongs to the methyltransferase superfamily. RNA methyltransferase RsmG family.

The protein localises to the cytoplasm. It carries out the reaction guanosine(527) in 16S rRNA + S-adenosyl-L-methionine = N(7)-methylguanosine(527) in 16S rRNA + S-adenosyl-L-homocysteine. Functionally, specifically methylates the N7 position of guanine in position 527 of 16S rRNA. This Rhizobium etli (strain ATCC 51251 / DSM 11541 / JCM 21823 / NBRC 15573 / CFN 42) protein is Ribosomal RNA small subunit methyltransferase G.